Reading from the N-terminus, the 400-residue chain is Glycerol-3-phosphate dehydrogenase [NAD(+)] 1, chloroplastic (400 aa).

The transit peptide at 1-32 (MRFRSFFFSSSIFSLSHSRSPSLSSSRFSSLS) directs the protein to the chloroplast. Residues 61-66 (GSGNWG), Phe-92, Phe-149, Lys-172, and Ala-205 contribute to the NAD(+) site. Lys-172 contributes to the substrate binding site. The active-site Proton acceptor is Lys-257. The NAD(+) site is built by Arg-321, Lys-350, and Gln-352. A substrate-binding site is contributed by 321–322 (RN).

This sequence belongs to the NAD-dependent glycerol-3-phosphate dehydrogenase family. Expressed in young seedlings, flowers and siliques. Expressed at low levels in roots.

Its subcellular location is the plastid. The protein resides in the chloroplast. It carries out the reaction sn-glycerol 3-phosphate + NAD(+) = dihydroxyacetone phosphate + NADH + H(+). It functions in the pathway membrane lipid metabolism; glycerophospholipid metabolism. Functionally, involved in glycerolipid metabolism. In Arabidopsis thaliana (Mouse-ear cress), this protein is Glycerol-3-phosphate dehydrogenase [NAD(+)] 1, chloroplastic (DHAPRD).